We begin with the raw amino-acid sequence, 190 residues long: Protein GrpE (190 aa).

The segment at 21-49 (DDLQEEVEATETEETVEEVIEETPEKSEL) is disordered. A compositionally biased stretch (acidic residues) spans 23–42 (LQEEVEATETEETVEEVIEE).

Belongs to the GrpE family. Homodimer.

The protein localises to the cytoplasm. Participates actively in the response to hyperosmotic and heat shock by preventing the aggregation of stress-denatured proteins, in association with DnaK and GrpE. It is the nucleotide exchange factor for DnaK and may function as a thermosensor. Unfolded proteins bind initially to DnaJ; upon interaction with the DnaJ-bound protein, DnaK hydrolyzes its bound ATP, resulting in the formation of a stable complex. GrpE releases ADP from DnaK; ATP binding to DnaK triggers the release of the substrate protein, thus completing the reaction cycle. Several rounds of ATP-dependent interactions between DnaJ, DnaK and GrpE are required for fully efficient folding. This is Protein GrpE from Streptococcus pyogenes serotype M3 (strain SSI-1).